The chain runs to 492 residues: Cytoplasmic dynein 1 light intermediate chain 2 (492 aa).

61–68 (GEDGSGKT) serves as a coordination point for ATP. 3 disordered regions span residues 187–206 (PEEG…SGSD), 371–423 (AKQP…KNNA), and 437–492 (LSKK…ENEA). Ser-194 is modified (phosphoserine). Polar residues predominate over residues 371-381 (AKQPATPTRAS). Phosphoserine is present on residues Ser-383 and Ser-391. Residue Arg-397 is modified to Omega-N-methylarginine. The segment covering 400-412 (PASVPSSSPGTSV) has biased composition (low complexity). A Phosphothreonine modification is found at Thr-441. Ser-443 and Ser-446 each carry phosphoserine. A compositionally biased stretch (polar residues) spans 452–469 (VQSTAKKSGQKTVLSNVQ). The segment covering 471–480 (ELDRMTRKPD) has biased composition (basic and acidic residues). A compositionally biased stretch (polar residues) spans 482–492 (MVTNSSTENEA).

This sequence belongs to the dynein light intermediate chain family. In terms of assembly, homodimer. The cytoplasmic dynein 1 complex consists of two catalytic heavy chains (HCs) and a number of non-catalytic subunits presented by intermediate chains (ICs), light intermediate chains (LICs) and light chains (LCs); the composition seems to vary in respect to the IC, LIC and LC composition. The heavy chain homodimer serves as a scaffold for the probable homodimeric assembly of the respective non-catalytic subunits. The ICs and LICs bind directly to the HC dimer and the LCs assemble on the IC dimer. Interacts with DYNC1H1; DYNC1LI1 and DYNC1LI2 bind mutually exclusive to DYNC1H.

The protein resides in the cytoplasm. The protein localises to the cytoskeleton. In terms of biological role, acts as one of several non-catalytic accessory components of the cytoplasmic dynein 1 complex that are thought to be involved in linking dynein to cargos and to adapter proteins that regulate dynein function. Cytoplasmic dynein 1 acts as a motor for the intracellular retrograde motility of vesicles and organelles along microtubules. May play a role in binding dynein to membranous organelles or chromosomes. The polypeptide is Cytoplasmic dynein 1 light intermediate chain 2 (Homo sapiens (Human)).